Reading from the N-terminus, the 340-residue chain is Glutamine synthetase (340 aa).

The 80-residue stretch at 3–82 folds into the GS beta-grasp domain; the sequence is IKAEYIWIDG…LCEVLHTDLT (80 aa). Residues 88-340 form the GS catalytic domain; sequence TRALLRPVAE…CTELARREQI (253 aa). Positions 109, 111, 171, and 178 each coordinate Mg(2+). Glu276 lines the L-glutamate pocket.

Belongs to the glutamine synthetase family. As to quaternary structure, homooctamer and homotetramer. Mg(2+) serves as cofactor.

It localises to the cytoplasm. The enzyme catalyses L-glutamate + NH4(+) + ATP = L-glutamine + ADP + phosphate + H(+). Catalyzes the ATP-dependent biosynthesis of glutamine from glutamate and ammonia. The polypeptide is Glutamine synthetase (Streptomyces hygroscopicus).